Reading from the N-terminus, the 63-residue chain is Large ribosomal subunit protein uL29 (63 aa).

This sequence belongs to the universal ribosomal protein uL29 family.

This chain is Large ribosomal subunit protein uL29, found in Salmonella agona (strain SL483).